Reading from the N-terminus, the 222-residue chain is ATP synthase F(0) complex subunit a (222 aa).

6 consecutive transmembrane segments (helical) span residues 7–27, 64–84, 93–113, 132–152, 160–180, and 185–205; these read AFFDVPVGTMMLAIAFPAILL, WSLMLITLTLFIGLTNLLGLL, QLTVNLSMAIPLWTGTVILGF, FLIPMIIIIETISLLIRPVTL, ITAGHLLIHLTGTAALTLLSI, and ITVTFITVVVLTILELAVALI.

This sequence belongs to the ATPase A chain family. Component of the ATP synthase complex composed at least of ATP5F1A/subunit alpha, ATP5F1B/subunit beta, ATP5MC1/subunit c (homooctomer), MT-ATP6/subunit a, MT-ATP8/subunit 8, ATP5ME/subunit e, ATP5MF/subunit f, ATP5MG/subunit g, ATP5MK/subunit k, ATP5MJ/subunit j, ATP5F1C/subunit gamma, ATP5F1D/subunit delta, ATP5F1E/subunit epsilon, ATP5PF/subunit F6, ATP5PB/subunit b, ATP5PD/subunit d, ATP5PO/subunit OSCP. ATP synthase complex consists of a soluble F(1) head domain (subunits alpha(3) and beta(3)) - the catalytic core - and a membrane F(0) domain - the membrane proton channel (subunits c, a, 8, e, f, g, k and j). These two domains are linked by a central stalk (subunits gamma, delta, and epsilon) rotating inside the F1 region and a stationary peripheral stalk (subunits F6, b, d, and OSCP). Interacts with DNAJC30; interaction is direct.

It is found in the mitochondrion inner membrane. It catalyses the reaction H(+)(in) = H(+)(out). Its function is as follows. Subunit a, of the mitochondrial membrane ATP synthase complex (F(1)F(0) ATP synthase or Complex V) that produces ATP from ADP in the presence of a proton gradient across the membrane which is generated by electron transport complexes of the respiratory chain. ATP synthase complex consist of a soluble F(1) head domain - the catalytic core - and a membrane F(1) domain - the membrane proton channel. These two domains are linked by a central stalk rotating inside the F(1) region and a stationary peripheral stalk. During catalysis, ATP synthesis in the catalytic domain of F(1) is coupled via a rotary mechanism of the central stalk subunits to proton translocation. With the subunit c (ATP5MC1), forms the proton-conducting channel in the F(0) domain, that contains two crucial half-channels (inlet and outlet) that facilitate proton movement from the mitochondrial intermembrane space (IMS) into the matrix. Protons are taken up via the inlet half-channel and released through the outlet half-channel, following a Grotthuss mechanism. In Mammuthus primigenius (Siberian woolly mammoth), this protein is ATP synthase F(0) complex subunit a.